We begin with the raw amino-acid sequence, 310 residues long: Apolipoprotein E (310 aa).

The signal sequence occupies residues 1–18 (MKVLWPALVVTLLAGCRA). Tandem repeats lie at residues 77–98 (ALMD…EQLG), 99–120 (PVAE…ARLG), 121–142 (ADME…AMVG), 143–164 (QSTE…KRLL), 165–186 (RDAE…EGAE), 187–208 (RSVN…TMHT), 209–226 (LVSK…QRLR), and 227–248 (GRLE…EQVQ). The 8 X 22 AA approximate tandem repeats stretch occupies residues 77–248 (ALMDDTMKEV…RLDEVREQVQ (172 aa)). An LDL and other lipoprotein receptors binding region spans residues 155–165 (HLRKLRKRLLR). A heparin-binding site is contributed by 159 to 162 (LRKR). Residues 207-283 (HTLVSKPLQE…SWFEPLVQDM (77 aa)) form a lipid-binding and lipoprotein association region. 222-229 (AQRLRGRL) serves as a coordination point for heparin. The homooligomerization stretch occupies residues 259–310 (NQVRLQAEAFQGRLKSWFEPLVQDMQQKWAELVEKVQLALRAVPTSVPSEKQ). A specificity for association with VLDL region spans residues 271–283 (RLKSWFEPLVQDM).

This sequence belongs to the apolipoprotein A1/A4/E family. In terms of assembly, homotetramer. May interact with ABCA1; functionally associated with ABCA1 in the biogenesis of HDLs. May interact with APP/A4 amyloid-beta peptide; the interaction is extremely stable in vitro but its physiological significance is unclear. May interact with MAPT. May interact with MAP2. In the cerebrospinal fluid, interacts with secreted SORL1. Interacts with PMEL; this allows the loading of PMEL luminal fragment on ILVs to induce fibril nucleation. In terms of processing, APOE exists as multiple glycosylated and sialylated glycoforms within cells and in plasma. The extent of glycosylation and sialylation are tissue and context specific. Post-translationally, glycated in plasma VLDL. Phosphorylated by FAM20C in the extracellular medium.

The protein localises to the secreted. The protein resides in the extracellular space. It is found in the extracellular matrix. Its subcellular location is the extracellular vesicle. It localises to the endosome. The protein localises to the multivesicular body. APOE is an apolipoprotein, a protein associating with lipid particles, that mainly functions in lipoprotein-mediated lipid transport between organs via the plasma and interstitial fluids. APOE is a core component of plasma lipoproteins and is involved in their production, conversion and clearance. Apolipoproteins are amphipathic molecules that interact both with lipids of the lipoprotein particle core and the aqueous environment of the plasma. As such, APOE associates with chylomicrons, chylomicron remnants, very low density lipoproteins (VLDL) and intermediate density lipoproteins (IDL) but shows a preferential binding to high-density lipoproteins (HDL). It also binds a wide range of cellular receptors including the LDL receptor/LDLR and the very low-density lipoprotein receptor/VLDLR that mediate the cellular uptake of the APOE-containing lipoprotein particles. Finally, APOE also has a heparin-binding activity and binds heparan-sulfate proteoglycans on the surface of cells, a property that supports the capture and the receptor-mediated uptake of APOE-containing lipoproteins by cells. The protein is Apolipoprotein E (APOE) of Dicerorhinus sumatrensis harrissoni (Bornean rhinoceros).